The primary structure comprises 548 residues: Chaperonin GroEL (548 aa).

ATP-binding positions include 30 to 33 (TLGP), K51, 87 to 91 (DGTTT), G415, 478 to 480 (NAA), and D494.

Belongs to the chaperonin (HSP60) family. In terms of assembly, forms a cylinder of 14 subunits composed of two heptameric rings stacked back-to-back. Interacts with the co-chaperonin GroES.

The protein resides in the cytoplasm. It carries out the reaction ATP + H2O + a folded polypeptide = ADP + phosphate + an unfolded polypeptide.. Its function is as follows. Together with its co-chaperonin GroES, plays an essential role in assisting protein folding. The GroEL-GroES system forms a nano-cage that allows encapsulation of the non-native substrate proteins and provides a physical environment optimized to promote and accelerate protein folding. The polypeptide is Chaperonin GroEL (Janthinobacterium sp. (strain Marseille) (Minibacterium massiliensis)).